A 189-amino-acid polypeptide reads, in one-letter code: Putative manganese efflux pump MntP (189 aa).

6 helical membrane passes run 3–23 (LSAT…ASIG), 41–61 (LIFG…GLFA), 65–85 (ILEW…CRMI), 104–124 (FWVL…IGVG), 132–152 (IVHT…LGML), and 165–185 (AEII…YEHI).

The protein belongs to the MntP (TC 9.B.29) family.

The protein localises to the cell inner membrane. Its function is as follows. Probably functions as a manganese efflux pump. This chain is Putative manganese efflux pump MntP, found in Yersinia enterocolitica serotype O:8 / biotype 1B (strain NCTC 13174 / 8081).